The sequence spans 148 residues: Deoxyuridine 5'-triphosphate nucleotidohydrolase (148 aa).

Residues 68-70, Asn81, 85-87, and Lys95 each bind substrate; these read RSG and TID.

It belongs to the dUTPase family. Mg(2+) serves as cofactor.

It carries out the reaction dUTP + H2O = dUMP + diphosphate + H(+). It participates in pyrimidine metabolism; dUMP biosynthesis; dUMP from dCTP (dUTP route): step 2/2. Functionally, this enzyme is involved in nucleotide metabolism: it produces dUMP, the immediate precursor of thymidine nucleotides and it decreases the intracellular concentration of dUTP so that uracil cannot be incorporated into DNA. The protein is Deoxyuridine 5'-triphosphate nucleotidohydrolase of Thermoanaerobacter sp. (strain X514).